The sequence spans 402 residues: Dual-specificity RNA methyltransferase RlmN (402 aa).

Glutamate 124 acts as the Proton acceptor in catalysis. Residues 130–370 (DADRGTLCVS…APVRTPRGRD (241 aa)) form the Radical SAM core domain. The cysteines at positions 137 and 375 are disulfide-linked. [4Fe-4S] cluster is bound by residues cysteine 144, cysteine 148, and cysteine 151. Residues 199–200 (GE), serine 231, 253–255 (SLH), and asparagine 332 contribute to the S-adenosyl-L-methionine site. The active-site S-methylcysteine intermediate is the cysteine 375.

The protein belongs to the radical SAM superfamily. RlmN family. It depends on [4Fe-4S] cluster as a cofactor.

It localises to the cytoplasm. It carries out the reaction adenosine(2503) in 23S rRNA + 2 reduced [2Fe-2S]-[ferredoxin] + 2 S-adenosyl-L-methionine = 2-methyladenosine(2503) in 23S rRNA + 5'-deoxyadenosine + L-methionine + 2 oxidized [2Fe-2S]-[ferredoxin] + S-adenosyl-L-homocysteine. The catalysed reaction is adenosine(37) in tRNA + 2 reduced [2Fe-2S]-[ferredoxin] + 2 S-adenosyl-L-methionine = 2-methyladenosine(37) in tRNA + 5'-deoxyadenosine + L-methionine + 2 oxidized [2Fe-2S]-[ferredoxin] + S-adenosyl-L-homocysteine. Specifically methylates position 2 of adenine 2503 in 23S rRNA and position 2 of adenine 37 in tRNAs. m2A2503 modification seems to play a crucial role in the proofreading step occurring at the peptidyl transferase center and thus would serve to optimize ribosomal fidelity. The polypeptide is Dual-specificity RNA methyltransferase RlmN (Rhizorhabdus wittichii (strain DSM 6014 / CCUG 31198 / JCM 15750 / NBRC 105917 / EY 4224 / RW1) (Sphingomonas wittichii)).